A 501-amino-acid polypeptide reads, in one-letter code: Cytochrome P450 3A31 (501 aa).

Cys-440 contacts heme.

The protein belongs to the cytochrome P450 family. Heme is required as a cofactor. As to expression, expressed constitutively in liver.

It localises to the endoplasmic reticulum membrane. The protein resides in the microsome membrane. It carries out the reaction an organic molecule + reduced [NADPH--hemoprotein reductase] + O2 = an alcohol + oxidized [NADPH--hemoprotein reductase] + H2O + H(+). Functionally, cytochromes P450 are a group of heme-thiolate monooxygenases. In liver microsomes, this enzyme is involved in an NADPH-dependent electron transport pathway. It oxidizes a variety of structurally unrelated compounds, including steroids, fatty acids, and xenobiotics. The polypeptide is Cytochrome P450 3A31 (CYP3A31) (Mesocricetus auratus (Golden hamster)).